The primary structure comprises 315 residues: Transaldolase (315 aa).

The Schiff-base intermediate with substrate role is filled by lysine 125.

This sequence belongs to the transaldolase family. Type 1 subfamily. Homodimer.

The protein resides in the cytoplasm. It carries out the reaction D-sedoheptulose 7-phosphate + D-glyceraldehyde 3-phosphate = D-erythrose 4-phosphate + beta-D-fructose 6-phosphate. It participates in carbohydrate degradation; pentose phosphate pathway; D-glyceraldehyde 3-phosphate and beta-D-fructose 6-phosphate from D-ribose 5-phosphate and D-xylulose 5-phosphate (non-oxidative stage): step 2/3. Its function is as follows. Transaldolase is important for the balance of metabolites in the pentose-phosphate pathway. This chain is Transaldolase, found in Paracidovorax citrulli (strain AAC00-1) (Acidovorax citrulli).